Consider the following 1075-residue polypeptide: MLKPQPLQQPSQPQQPPPTQQAVARRPPGGTSPPNGGLPGPLATSAAPPGPPAAASPCLGPVAAAGSGLRRGAEGILAPQPPPPQQHQERPGAAAIGSARGQSTGKGPPQSPVFEGVYNNSRMLHFLTAVVGSTCDVKVKNGTTYEGIFKTLSSKFELAVDAVHRKASEPAGGPRREDIVDTMVFKPSDVMLVHFRNVDFNYATKDKFTDSAIAMNSKVNGEHKEKVLQRWEGGDSNSDDYDLESDMSNGWDPNEMFKFNEENYGVKTTYDSSLSSYTVPLEKDNSEEFRQRELRAAQLAREIESSPQYRLRIAMENDDGRTEEEKHSAVQRQGSGRESPSLASREGKYIPLPQRVREGPRGGVRCSSSRGGRPGLSSLPPRGPHHLDNSSPGPGSEARGINGGPSRMSPKAQRPLRGAKTLSSPSNRPSGETSVPPPPAVGRMYPPRSPKSAAPAPISASCPEPPIGSAVPTSSASIPVTSSVSDPGVGSISPASPKISLAPTDVKELSTKEPGRTLEPQELARIAGKVPGLQNEQKRFQLEELRKFGAQFKLQPSSSPENSLDPFPPRILKEEPKGKEKEVDGLLTSEPMGSPVSSKTESVSDKEDKPPLAPSGGTEGPEQPPPPCPSQTGSPPVGLIKGEDKDEGPVAEQVKKSTLNPNAKEFNPTKPLLSVNKSTSTPTSPGPRTHSTPSIPVLTAGQSGLYSPQYISYIPQIHMGPAVQAPQMYPYPVSNSVPGQQGKYRGAKGSLPPQRSDQHQPASAPPMMQAAAAAGPPLVAATPYSSYIPYNPQQFPGQPAMMQPMAHYPSQPVFAPMLQSNPRMLTSGSHPQAIVSSSTPQYPSAEQPTPQALYATVHQSYPHHATQLHAHQPQPATTPTGSQPQSQHAAPSPVQHQAGQAPHLGSGQPQQNLYHPGALTGTPPSLPPGPSAQSPQSSFPQPAAVYAIHHQQLPHGFTNMAHVTQAHVQTGITAAPPPHPGAPHPPQVMLLHPPQSHGGPPQGAVPQSGVPALSASTPSPYPYIGHPQGEQPGQAPGFPGGADDRIREFSLAGGIWHGRAEGLQVGQDARVLGGE.

M1 is subject to N-acetylmethionine. Positions 1 to 12 are enriched in low complexity; it reads MLKPQPLQQPSQ. Positions 1–115 are disordered; that stretch reads MLKPQPLQQP…KGPPQSPVFE (115 aa). The segment at 98 to 121 is interaction with MPL; that stretch reads SARGQSTGKGPPQSPVFEGVYNNS. A phosphoserine mark is found at S103 and S111. Y118 is modified (phosphotyrosine). Residues 122-199 enclose the Sm domain; that stretch reads RMLHFLTAVV…VMLVHFRNVD (78 aa). Position 207 is an N6-acetyllysine (K207). S238 carries the phosphoserine modification. The residue at position 264 (Y264) is a Phosphotyrosine. At S306 the chain carries Phosphoserine. The residue at position 309 (Y309) is a Phosphotyrosine. A compositionally biased stretch (basic and acidic residues) spans 316-328; sequence ENDDGRTEEEKHS. Disordered stretches follow at residues 316–521, 551–697, 733–770, 820–849, 865–940, and 1022–1045; these read ENDD…LEPQ, QFKL…SIPV, VSNS…MMQA, SNPR…EQPT, ATQL…SSFP, and PYIG…ADDR. Positions 330–342 are enriched in polar residues; sequence VQRQGSGRESPSL. Residues S335 and S339 each carry the phosphoserine modification. K348 participates in a covalent cross-link: Glycyl lysine isopeptide (Lys-Gly) (interchain with G-Cter in SUMO2). The residue at position 349 (Y349) is a Phosphotyrosine. Position 361 is an asymmetric dimethylarginine (R361). Over residues 363–380 the composition is skewed to low complexity; it reads GVRCSSSRGGRPGLSSLP. Phosphoserine occurs at positions 391 and 409. Over residues 421–433 the composition is skewed to polar residues; the sequence is TLSSPSNRPSGET. S449 carries the post-translational modification Phosphoserine. 2 stretches are compositionally biased toward low complexity: residues 450-462 and 471-485; these read PKSA…SASC and VPTS…SSVS. A phosphoserine mark is found at S493 and S496. Positions 505–516 are enriched in basic and acidic residues; sequence DVKELSTKEPGR. Phosphoserine is present on residues S557, S558, S559, and S563. Over residues 571–584 the composition is skewed to basic and acidic residues; that stretch reads ILKEEPKGKEKEVD. S594 is modified (phosphoserine). T632 carries the post-translational modification Phosphothreonine. Phosphoserine is present on residues S634, S674, S680, and S684. Low complexity-rich tracts occupy residues 678-694 and 761-770; these read STST…STPS and PASAPPMMQA. The segment covering 874–898 has biased composition (polar residues); that stretch reads QPATTPTGSQPQSQHAAPSPVQHQA. 2 stretches are compositionally biased toward low complexity: residues 931-940 and 1025-1037; these read SAQSPQSSFP and GHPQ…QAPG.

This sequence belongs to the ataxin-2 family. As to quaternary structure, interacts with MPL/TPOR and EPOR and dissociates after ligand stimulation. Interacts with DDX6, G3BP1, and ATXN2. Interacts with PRMT1. Interacts with CIC and ATXN1. Post-translationally, thrombopoietin triggers the phosphorylation on tyrosine residues in a way that is dependent on MPL C-terminal domain. Asymmetrically dimethylated. Probably methylated by PRMT1. In terms of tissue distribution, expressed at high levels in thymus, lymph node, spleen, fetal kidney and adult testis. Constitutively associated with MPL and EPOR in hematopoietic cells.

Its subcellular location is the membrane. It is found in the cytoplasm. It localises to the nucleus speckle. The protein localises to the cytoplasmic granule. Involved in the regulation of stress granule and P-body formation. The polypeptide is Ataxin-2-like protein (ATXN2L) (Homo sapiens (Human)).